The primary structure comprises 131 residues: D-ribose pyranase (131 aa).

The active-site Proton donor is the histidine 20. Substrate is bound by residues aspartate 28, histidine 98, and 120–122 (YCN).

It belongs to the RbsD / FucU family. RbsD subfamily. Homodecamer.

The protein resides in the cytoplasm. It carries out the reaction beta-D-ribopyranose = beta-D-ribofuranose. The protein operates within carbohydrate metabolism; D-ribose degradation; D-ribose 5-phosphate from beta-D-ribopyranose: step 1/2. Catalyzes the interconversion of beta-pyran and beta-furan forms of D-ribose. The protein is D-ribose pyranase of Coprothermobacter proteolyticus (strain ATCC 35245 / DSM 5265 / OCM 4 / BT).